Reading from the N-terminus, the 329-residue chain is Endonuclease 8-like 2 (329 aa).

P2 serves as the catalytic Schiff-base intermediate with DNA. E3 serves as the catalytic Proton donor. The Proton donor; for beta-elimination activity role is filled by K50. K50 carries the N6-acetyllysine modification. Position 68 is a phosphoserine (S68). Residues 68–116 (SLLSEPLREGEQKDKARHHQEASDPSSWSPGGDSAVPSGDDGLQCLGGD) are disordered. Positions 73–89 (PLREGEQKDKARHHQEA) are enriched in basic and acidic residues. Positions 90-102 (SDPSSWSPGGDSA) are enriched in low complexity. K149 is modified (N6-acetyllysine). N227 contacts DNA. Residues 280 to 316 (QIYQKEQCPAGHQVVRESLGPPGGFQRLTWWCPQCQP) form an FPG-type zinc finger. R306 (proton donor; for delta-elimination activity) is an active-site residue.

It belongs to the FPG family. Binds EP300.

It is found in the nucleus. It carries out the reaction 2'-deoxyribonucleotide-(2'-deoxyribose 5'-phosphate)-2'-deoxyribonucleotide-DNA = a 3'-end 2'-deoxyribonucleotide-(2,3-dehydro-2,3-deoxyribose 5'-phosphate)-DNA + a 5'-end 5'-phospho-2'-deoxyribonucleoside-DNA + H(+). Acetylation of Lys-50 leads to loss of DNA nicking activity. Functionally, involved in base excision repair of DNA damaged by oxidation or by mutagenic agents. Has DNA glycosylase activity towards 5-hydroxyuracil and other oxidized derivatives of cytosine with a preference for mismatched double-stranded DNA (DNA bubbles). Has low or no DNA glycosylase activity towards thymine glycol, 2-hydroxyadenine, hypoxanthine and 8-oxoguanine. Has AP (apurinic/apyrimidinic) lyase activity and introduces nicks in the DNA strand. Cleaves the DNA backbone by beta-delta elimination to generate a single-strand break at the site of the removed base with both 3'- and 5'-phosphates. The polypeptide is Endonuclease 8-like 2 (NEIL2) (Bos taurus (Bovine)).